The following is a 360-amino-acid chain: uncharacterized protein (360 aa).

4-22 (KVLHIGAGGFGERWCDTFL) is a binding site for NAD(+).

Functionally, could be a NAD-dependent oxidoreductase. This is an uncharacterized protein from Sinorhizobium fredii (strain NBRC 101917 / NGR234).